A 274-amino-acid polypeptide reads, in one-letter code: Single-stranded DNA-binding protein WHY1, chloroplastic (274 aa).

The transit peptide at 1–54 (MSNFSLSPSPTSGFSLNLQNPTKTSYLSFSSSINTIFAPLSSNTTKSFSGLTHK) directs the protein to the chloroplast. Residues 100-105 (KGKAAL) form a required for ssDNA binding region. A Nuclear localization signal motif is present at residues 178-191 (KGRSDEGRVRKVLK). The disordered stretch occupies residues 253–274 (PEDASRSNNANPRSGAELEWNR).

It belongs to the Whirly family. In terms of assembly, homotetramer.

Its subcellular location is the nucleus. The protein resides in the plastid. It localises to the chloroplast. In terms of biological role, single-stranded DNA-binding protein that acts as a transcriptional activator of the pathogenesis-related gene PR-10a. Upon elicitation, binds a 30bp promoter sequence known as elicitor element response (ERE) and is required for PR-10a expression. The polypeptide is Single-stranded DNA-binding protein WHY1, chloroplastic (WHY1) (Solanum tuberosum (Potato)).